A 341-amino-acid chain; its full sequence is UDP-3-O-acylglucosamine N-acyltransferase (341 aa).

Catalysis depends on His-241, which acts as the Proton acceptor.

The protein belongs to the transferase hexapeptide repeat family. LpxD subfamily. In terms of assembly, homotrimer.

It carries out the reaction a UDP-3-O-[(3R)-3-hydroxyacyl]-alpha-D-glucosamine + a (3R)-hydroxyacyl-[ACP] = a UDP-2-N,3-O-bis[(3R)-3-hydroxyacyl]-alpha-D-glucosamine + holo-[ACP] + H(+). Its pathway is bacterial outer membrane biogenesis; LPS lipid A biosynthesis. Catalyzes the N-acylation of UDP-3-O-acylglucosamine using 3-hydroxyacyl-ACP as the acyl donor. Is involved in the biosynthesis of lipid A, a phosphorylated glycolipid that anchors the lipopolysaccharide to the outer membrane of the cell. This Saccharophagus degradans (strain 2-40 / ATCC 43961 / DSM 17024) protein is UDP-3-O-acylglucosamine N-acyltransferase.